The primary structure comprises 454 residues: Bifunctional protein GlmU (454 aa).

The segment at 1–229 is pyrophosphorylase; that stretch reads MQRYAVVLAA…FDEIMGVNDR (229 aa). UDP-N-acetyl-alpha-D-glucosamine contacts are provided by residues 8–11, lysine 22, glutamine 72, and 77–78; these read LAAG and GT. Aspartate 102 contributes to the Mg(2+) binding site. The UDP-N-acetyl-alpha-D-glucosamine site is built by glycine 139, glutamate 154, and asparagine 227. Asparagine 227 contacts Mg(2+). The linker stretch occupies residues 230 to 250; that stretch reads VALSKAEQAMRQRINEYHMRN. The tract at residues 251–454 is N-acetyltransferase; the sequence is GVTLIDPSST…KPGYLNKNKE (204 aa). UDP-N-acetyl-alpha-D-glucosamine is bound by residues arginine 332 and lysine 350. The active-site Proton acceptor is the histidine 362. UDP-N-acetyl-alpha-D-glucosamine-binding residues include tyrosine 365 and asparagine 376. Acetyl-CoA contacts are provided by residues 385–386, alanine 422, and arginine 439; that span reads NY.

It in the N-terminal section; belongs to the N-acetylglucosamine-1-phosphate uridyltransferase family. In the C-terminal section; belongs to the transferase hexapeptide repeat family. As to quaternary structure, homotrimer. Mg(2+) serves as cofactor.

Its subcellular location is the cytoplasm. The enzyme catalyses alpha-D-glucosamine 1-phosphate + acetyl-CoA = N-acetyl-alpha-D-glucosamine 1-phosphate + CoA + H(+). It carries out the reaction N-acetyl-alpha-D-glucosamine 1-phosphate + UTP + H(+) = UDP-N-acetyl-alpha-D-glucosamine + diphosphate. Its pathway is nucleotide-sugar biosynthesis; UDP-N-acetyl-alpha-D-glucosamine biosynthesis; N-acetyl-alpha-D-glucosamine 1-phosphate from alpha-D-glucosamine 6-phosphate (route II): step 2/2. The protein operates within nucleotide-sugar biosynthesis; UDP-N-acetyl-alpha-D-glucosamine biosynthesis; UDP-N-acetyl-alpha-D-glucosamine from N-acetyl-alpha-D-glucosamine 1-phosphate: step 1/1. It participates in bacterial outer membrane biogenesis; LPS lipid A biosynthesis. Catalyzes the last two sequential reactions in the de novo biosynthetic pathway for UDP-N-acetylglucosamine (UDP-GlcNAc). The C-terminal domain catalyzes the transfer of acetyl group from acetyl coenzyme A to glucosamine-1-phosphate (GlcN-1-P) to produce N-acetylglucosamine-1-phosphate (GlcNAc-1-P), which is converted into UDP-GlcNAc by the transfer of uridine 5-monophosphate (from uridine 5-triphosphate), a reaction catalyzed by the N-terminal domain. The sequence is that of Bifunctional protein GlmU from Staphylococcus carnosus (strain TM300).